The chain runs to 1037 residues: Importin-8 (1037 aa).

The Importin N-terminal domain maps to 22–102 (AENELNQSYK…RDNIVEGIIR (81 aa)). The span at 886–895 (DRSKAEKADM) shows a compositional bias: basic and acidic residues. The segment at 886-934 (DRSKAEKADMEENEEISSDEEETNVTAQAMQSNNGRGEDEEEEDDDWDE) is disordered. The segment covering 896-908 (EENEEISSDEEET) has biased composition (acidic residues). 2 positions are modified to phosphoserine: Ser902 and Ser903. Residues 909-920 (NVTAQAMQSNNG) show a composition bias toward polar residues. Positions 923–934 (EDEEEEDDDWDE) are enriched in acidic residues.

This sequence belongs to the importin beta family. Forms a heterodimer with KPNB1. Interacts with SRP19. Interacts with RPL23A. Binds directly to nuclear pore complexes. Interacts with LRPPRC; the interaction occurs when LRPPRC is in its RNA-free form and promotes import of LRPPRC to the nucleus to allow for EIF4E-mediated export of mRNAS from the nucleus to the cytoplasm.

It is found in the cytoplasm. It localises to the nucleus. Involved in nuclear protein import, either by acting as autonomous nuclear transport receptor or as an adapter-like protein in association with the importin-beta subunit KPNB1. Acting autonomously, may serve as receptor for nuclear localization signals (NLS) and promote translocation of import substrates through the nuclear pore complex (NPC) by an energy requiring, Ran-dependent mechanism. At the nucleoplasmic side of the NPC, Ran binds to importin, the importin/substrate complex dissociates and importin is re-exported from the nucleus to the cytoplasm where GTP hydrolysis releases Ran. The directionality of nuclear import is thought to be conferred by an asymmetric distribution of the GTP- and GDP-bound forms of Ran between the cytoplasm and nucleus. In vitro mediates the nuclear import of the signal recognition particle protein SRP19. May also be involved in cytoplasm-to-nucleus shuttling of a broad spectrum of other cargos, including Argonaute-microRNAs complexes, the JUN protein, RELA/NF-kappa-B p65 subunit, the translation initiation factor EIF4E and a set of receptor-activated mothers against decapentaplegic homolog (SMAD) transcription factors that play a critical role downstream of the large family of transforming growth factor beta and bone morphogenetic protein (BMP) cytokines. This Homo sapiens (Human) protein is Importin-8 (IPO8).